The following is a 585-amino-acid chain: Zinc finger protein 732 (585 aa).

Positions 4–75 constitute a KRAB domain; sequence LTFRDVAIEF…KIHETVAKHP (72 aa). The C2H2-type 1; degenerate zinc-finger motif lies at 141–163; it reads FQCNVHVKVFSTFSNSNQRRIRH. The C2H2-type 2; degenerate zinc-finger motif lies at 167-189; sequence KHFKECGKSFQKFSDLTQHQGIH. The C2H2-type 3; degenerate zinc finger occupies 195-217; the sequence is YTCEECGKDFKWYLIFNEYEIIH. Residues 223-244 form a C2H2-type 4 zinc finger; it reads FTCEECGNIFTTSSNFAKHKVH. The segment at 250–272 adopts a C2H2-type 5; degenerate zinc-finger fold; sequence YKYEECGKAFNRSSTLTKHKRIH. 9 C2H2-type zinc fingers span residues 278–300, 306–328, 334–356, 362–384, 390–412, 418–440, 446–468, 474–496, and 502–524; these read FTCE…KKIH, YKCQ…NRIH, YTCE…KRIH, YKCE…KSIH, HKCE…KIIH, YKCE…KKIH, YRCE…KTIH, and YECE…KKIH. Residues 530–552 form a C2H2-type 15; degenerate zinc finger; sequence YRCEECGKAFRRSRVLNKYKTIH. The C2H2-type 16; degenerate zinc-finger motif lies at 558 to 580; it reads PKCKGCGKAFKWSSYLNQHNKIY.

The protein belongs to the krueppel C2H2-type zinc-finger protein family.

It is found in the nucleus. Functionally, may be involved in transcriptional regulation. This is Zinc finger protein 732 (ZNF732) from Homo sapiens (Human).